The following is a 185-amino-acid chain: Ribosome-recycling factor (185 aa).

The protein belongs to the RRF family.

It is found in the cytoplasm. Functionally, responsible for the release of ribosomes from messenger RNA at the termination of protein biosynthesis. May increase the efficiency of translation by recycling ribosomes from one round of translation to another. The chain is Ribosome-recycling factor from Clavibacter sepedonicus (Clavibacter michiganensis subsp. sepedonicus).